A 245-amino-acid chain; its full sequence is P2Y purinoceptor 13 (245 aa).

Residues 1–9 (QLRAFVCRL) are Extracellular-facing. C7 and C85 are disulfide-bonded. A helical membrane pass occupies residues 10 to 30 (SSVIFYETMYVGIVLLGLIAF). Topologically, residues 31 to 35 (DRFLK) are cytoplasmic. A helical membrane pass occupies residues 36–56 (IIRPLRNIFLKKTVFAKTVSV). At 57-85 (FIWSFFFFISLPNMILSNKEATPSSVKKC) the chain is on the extracellular side. The helical transmembrane segment at 86–106 (ASLKGPLGLKWHQIVNNISQF) threads the bilayer. The Cytoplasmic segment spans residues 107 to 126 (IFWTVFVLMLVFYVVIAKKV). The chain crosses the membrane as a helical span at residues 127–147 (YDSYRKSKSKDRKNNKKLEGK). Residues 148 to 174 (VFVVVAVFFVCFAPFHFTRVPYTYSQT) are Extracellular-facing. The helical transmembrane segment at 175-195 (NNKTDCRLQNQLFIAKETTLF) threads the bilayer. The Cytoplasmic segment spans residues 196 to 245 (LAATNICMDPLIYIFLCKKFTEKLPCMRGRKTIASSQENQSSQTDNITLG).

It belongs to the G-protein coupled receptor 1 family.

The protein localises to the cell membrane. Functionally, receptor for ADP. Coupled to G(i)-proteins. May play a role in hematopoiesis and the immune system. This chain is P2Y purinoceptor 13 (P2RY13), found in Macaca fascicularis (Crab-eating macaque).